Consider the following 516-residue polypeptide: Delta(24)-sterol reductase (516 aa).

A signal peptide spans 1–22; sequence MEPAVSLAVCALLFLLWVRLKG. The Lumenal segment spans residues 23–31; it reads LEFVLIHQR. The chain crosses the membrane as a helical span at residues 32-52; that stretch reads WVFVCLFLLPLSLIFDIYYYV. At 53 to 516 the chain is on the cytoplasmic side; that stretch reads RAWVVFKLSS…YDKICKAARH (464 aa). The FAD-binding PCMH-type domain occupies 58 to 234; that stretch reads FKLSSAPRLH…VAAEIRIIPA (177 aa). FAD is bound at residue 163–175; that stretch reads TVGGLIMGTGIES.

It belongs to the FAD-binding oxidoreductase/transferase type 4 family. As to quaternary structure, interacts with DHCR7; this interaction regulates DHCR7 activity. FAD is required as a cofactor. As to expression, highly expressed in brain and adrenal gland with moderate expression in liver, lung, spleen, prostate and spinal cord. Low expression in heart, uterus and prostate. Undetectable in blood cells. In the brain, strongly expressed in cortical regions, substantia nigra, caudate nucleus, hippocampus, medulla oblongata and pons. In brains affected by Alzheimer disease, expression in the inferior temporal lobe is substantially lower than in the frontal cortex.

It localises to the endoplasmic reticulum membrane. Its subcellular location is the golgi apparatus membrane. It carries out the reaction cholesterol + NADP(+) = desmosterol + NADPH + H(+). It catalyses the reaction lanosterol + NADPH + H(+) = 24,25-dihydrolanosterol + NADP(+). The enzyme catalyses 5alpha-cholest-8-en-3beta-ol + NADP(+) = zymosterol + NADPH + H(+). It functions in the pathway steroid biosynthesis; cholesterol biosynthesis. Functionally, catalyzes the reduction of the delta-24 double bond of sterol intermediates during cholesterol biosynthesis. In addition to its cholesterol-synthesizing activity, can protect cells from oxidative stress by reducing caspase 3 activity during apoptosis induced by oxidative stress. Also protects against amyloid-beta peptide-induced apoptosis. In Homo sapiens (Human), this protein is Delta(24)-sterol reductase (DHCR24).